The chain runs to 250 residues: MKICLIDETGAGDGALSVLASRWGLEHDEDNLMALVLTPEHLELRKRDEPKLGGIFVDFVGGTMAHRRKFGGGRGEAVAKAVGIKGDYLPDVVDATAGLGRDAFVLASVGCRVRMLERNPVVAALLDDGLARGYADAEIGGWLQERLQLIHASSLTALTDITPRPQVVYLDPMFPHKQKSALVKKEMRVFQSLVGPDLDADGLLEPARLLATKRVVVKRPDYAPPLANVATPNAVVTKGHRFDIYAGTPV.

Residues 101 to 102 (RD), 117 to 118 (ER), 153 to 154 (SS), and Asp171 contribute to the S-adenosyl-L-methionine site.

This sequence belongs to the methyltransferase superfamily. RsmJ family.

It localises to the cytoplasm. It catalyses the reaction guanosine(1516) in 16S rRNA + S-adenosyl-L-methionine = N(2)-methylguanosine(1516) in 16S rRNA + S-adenosyl-L-homocysteine + H(+). In terms of biological role, specifically methylates the guanosine in position 1516 of 16S rRNA. The protein is Ribosomal RNA small subunit methyltransferase J of Escherichia fergusonii (strain ATCC 35469 / DSM 13698 / CCUG 18766 / IAM 14443 / JCM 21226 / LMG 7866 / NBRC 102419 / NCTC 12128 / CDC 0568-73).